A 446-amino-acid chain; its full sequence is N-succinylarginine dihydrolase (446 aa).

Substrate-binding positions include 19-28 (SGLSYGNVAS), N110, and 137-138 (HR). E174 is a catalytic residue. A substrate-binding site is contributed by R214. Residue H250 is part of the active site. D252 and N363 together coordinate substrate. C369 acts as the Nucleophile in catalysis.

It belongs to the succinylarginine dihydrolase family. Homodimer.

It catalyses the reaction N(2)-succinyl-L-arginine + 2 H2O + 2 H(+) = N(2)-succinyl-L-ornithine + 2 NH4(+) + CO2. Its pathway is amino-acid degradation; L-arginine degradation via AST pathway; L-glutamate and succinate from L-arginine: step 2/5. Catalyzes the hydrolysis of N(2)-succinylarginine into N(2)-succinylornithine, ammonia and CO(2). The chain is N-succinylarginine dihydrolase from Hahella chejuensis (strain KCTC 2396).